We begin with the raw amino-acid sequence, 310 residues long: Tagatose-6-phosphate kinase (310 aa).

It belongs to the carbohydrate kinase PfkB family. LacC subfamily.

The catalysed reaction is D-tagatofuranose 6-phosphate + ATP = D-tagatofuranose 1,6-bisphosphate + ADP + H(+). It participates in carbohydrate metabolism; D-tagatose 6-phosphate degradation; D-glyceraldehyde 3-phosphate and glycerone phosphate from D-tagatose 6-phosphate: step 1/2. This chain is Tagatose-6-phosphate kinase, found in Staphylococcus epidermidis (strain ATCC 12228 / FDA PCI 1200).